We begin with the raw amino-acid sequence, 350 residues long: dTDP-D-glucose 4,6-dehydratase (350 aa).

A substrate-binding site is contributed by T142. Residue D143 is the Proton donor of the active site. Residues E144 and Y166 each act as proton acceptor in the active site.

The protein belongs to the NAD(P)-dependent epimerase/dehydratase family. dTDP-glucose dehydratase subfamily. Requires NAD(+) as cofactor.

The catalysed reaction is dTDP-alpha-D-glucose = dTDP-4-dehydro-6-deoxy-alpha-D-glucose + H2O. The sequence is that of dTDP-D-glucose 4,6-dehydratase (TGDS) from Homo sapiens (Human).